The sequence spans 105 residues: U-scoloptoxin(16)-Sm4a (105 aa).

An N-terminal signal peptide occupies residues 1–22; sequence MWALTVFVTILAAAIPITGVTG.

Belongs to the scoloptoxin-16 family. Contains 4 disulfide bonds. In terms of tissue distribution, expressed by the venom gland.

Its subcellular location is the secreted. The chain is U-scoloptoxin(16)-Sm4a from Scolopendra morsitans (Tanzanian blue ringleg centipede).